We begin with the raw amino-acid sequence, 263 residues long: Splicing regulator sde2 (263 aa).

A propeptide spans 1 to 84 (UBL); that stretch reads MECKTVFLNG…LTLCTRVLGG (84 aa). Disordered regions lie at residues 95 to 118, 137 to 158, and 194 to 263; these read AGGR…LDGN, PAET…LAAD, and STSA…LYGL. Positions 102-117 are enriched in basic and acidic residues; that stretch reads KRNEQENQDSCRDLDG. Composition is skewed to low complexity over residues 194–209 and 219–230; these read STSA…GATT and NNNSSINSWSRR.

It belongs to the SDE2 family. As to quaternary structure, interacts with cay1/cactin. Interacts with prp19. Interacts with cwf12. Interacts with cdc5. In terms of processing, the N-terminal UBL (ubiquitin-like) propeptide is cleaved at Gly-84 by the deubiquitinating enzymes ubp5 and ubp15; the resulting mature sde2 associates with spliceosomes. Polyubiquitinated; ubiquitination is partially dependent on ubr11.

It is found in the cytoplasm. It localises to the nucleus. Plays a role in pre-mRNA splicing by facilitating excision of introns featuring relatively long (&gt;21 nucleotides) spacing between the branchpoint and 3'-splice site (ss). Recruits cactin to the spliceosome which may enable folding of RNA between the branchpoint and 3'-ss, to guide the splice site towards the spliceosome's catalytic center. Required for proper chromatin organization by assisting splicing of components involved in genomic stability and telomere organization. This is Splicing regulator sde2 from Schizosaccharomyces pombe (strain 972 / ATCC 24843) (Fission yeast).